Consider the following 641-residue polypeptide: White-opaque regulator 3 (641 aa).

Residues 13–27 show a composition bias toward polar residues; sequence ANVNHQQLSQDTNSI. Disordered regions lie at residues 13-38, 146-245, and 258-287; these read ANVN…QQQP, QLAS…PMTR, and PIIY…PEPR. 2 stretches are compositionally biased toward low complexity: residues 28-38 and 151-160; these read PQQQLQQQQQP and QNQDQNQSQN. Residues 161–172 are compositionally biased toward polar residues; that stretch reads RYEQSSMTSIHT. A compositionally biased stretch (low complexity) spans 173-184; it reads NDNSSSVNNSPN. Polar residues predominate over residues 193–204; it reads STFQPQHSNEGS. Composition is skewed to low complexity over residues 216–242 and 264–280; these read QQQQ…PQQP and SSNS…NSSS. Residues 317-337 form a dksA C4-type zinc finger; it reads CRRCGSEIPLAERRFVLCPSC. Disordered stretches follow at residues 366–409, 480–507, 522–550, and 568–641; these read LSKE…KVCQ, MSHQ…PQPH, NSGV…HNGS, and LQLQ…YPNN. Basic and acidic residues predominate over residues 379–400; that stretch reads QNNKSNEDQNNESRRGSQEKPA. Pro residues predominate over residues 486–495; that stretch reads QPPPPPPPPL. Over residues 522–533 the composition is skewed to polar residues; it reads NSGVAGIQQPNN. Over residues 569–579 the composition is skewed to low complexity; sequence QLQQQQQQQQQ. Pro residues predominate over residues 597 to 606; it reads SFPPPPPPPL. A compositionally biased stretch (low complexity) spans 610–641; that stretch reads QHQGLQQYSHAQQQQQQQHQQQQPYHQEYPNN.

Its subcellular location is the nucleus. In terms of biological role, transcription factor that modulates the white-opaque switch. This is White-opaque regulator 3 (WOR3) from Candida albicans (strain SC5314 / ATCC MYA-2876) (Yeast).